Reading from the N-terminus, the 266-residue chain is MSEPEVTYSTVRLHKSSGLQKLVRHEETQGPREVGNRKCSAPWQLIVKALGILCFLLLVTVAVLAVKIFQYNQHKQEINETLNHHHNCSNMQRAFNLKEEMLTNKSIDCRPSNETLEYIKREQDRWDSKTKTVLDSSRDTGRGVKYWFCYSTKCYYFIMNKTTWSGCKANCQHYSVPILKIEDEDELKFLQRHVIPENYWIGLSYDKKKKEWAWIDNGPSKLDMKIRKMNFKSRGCVFLSKARIEDIDCNIPYYCICGKKLDKFPD.

The Cytoplasmic segment spans residues 1–48 (MSEPEVTYSTVRLHKSSGLQKLVRHEETQGPREVGNRKCSAPWQLIVK). A helical; Signal-anchor for type II membrane protein membrane pass occupies residues 49 to 69 (ALGILCFLLLVTVAVLAVKIF). Topologically, residues 70-266 (QYNQHKQEIN…CGKKLDKFPD (197 aa)) are extracellular. Residues Asn79, Asn87, Asn104, and Asn113 are each glycosylated (N-linked (GlcNAc...) asparagine). The tract at residues 147-151 (WFCYS) is involved in dimerization. A disulfide bridge links Cys149 with Cys154. The region spanning 150–258 (YSTKCYYFIM…CNIPYYCICG (109 aa)) is the C-type lectin domain. Asn160 carries an N-linked (GlcNAc...) asparagine glycan. Implicated in MHC class I binding regions lie at residues 160-162 (NKT), 195-196 (IP), 207-208 (KK), 224-233 (MKIRKMNFKS), and 240-245 (SKARIE). 3 disulfide bridges follow: Cys167/Cys255, Cys171/Cys257, and Cys236/Cys249.

Homodimer; disulfide-linked.

It localises to the membrane. Functionally, receptor on natural killer (NK) cells for class I MHC. The protein is Killer cell lectin-like receptor 3 (Klra3) of Mus musculus (Mouse).